The primary structure comprises 252 residues: Aspartate/glutamate leucyltransferase (252 aa).

The protein belongs to the R-transferase family. Bpt subfamily.

The protein resides in the cytoplasm. The catalysed reaction is N-terminal L-glutamyl-[protein] + L-leucyl-tRNA(Leu) = N-terminal L-leucyl-L-glutamyl-[protein] + tRNA(Leu) + H(+). The enzyme catalyses N-terminal L-aspartyl-[protein] + L-leucyl-tRNA(Leu) = N-terminal L-leucyl-L-aspartyl-[protein] + tRNA(Leu) + H(+). In terms of biological role, functions in the N-end rule pathway of protein degradation where it conjugates Leu from its aminoacyl-tRNA to the N-termini of proteins containing an N-terminal aspartate or glutamate. The sequence is that of Aspartate/glutamate leucyltransferase from Xanthomonas campestris pv. campestris (strain B100).